The chain runs to 395 residues: Mevalonate kinase (395 aa).

Residues K13, N55, N104, S135, and 140–146 (GAGLGSS) contribute to the ATP site. The Proton donor role is filled by S146. Mg(2+) is bound by residues S146 and E193. D204 (proton acceptor) is an active-site residue.

The protein belongs to the GHMP kinase family. Mevalonate kinase subfamily. As to quaternary structure, homodimer. It depends on Mg(2+) as a cofactor.

It localises to the cytoplasm. The protein resides in the peroxisome. The catalysed reaction is (R)-mevalonate + ATP = (R)-5-phosphomevalonate + ADP + H(+). The protein operates within isoprenoid biosynthesis; isopentenyl diphosphate biosynthesis via mevalonate pathway; isopentenyl diphosphate from (R)-mevalonate: step 1/3. With respect to regulation, farnesyl pyrophosphate and geranyl pyrophosphate inhibit mevalonate kinase activity by binding competitively at the ATP-binding sites. Its function is as follows. Catalyzes the phosphorylation of mevalonate to mevalonate 5-phosphate, a key step in isoprenoid and cholesterol biosynthesis. The protein is Mevalonate kinase of Mus musculus (Mouse).